The following is a 467-amino-acid chain: ATP-dependent protease ATPase subunit HslU (467 aa).

Residues Val-20, 62-67 (GVGKTE), Asp-280, Glu-345, and Arg-417 each bind ATP.

Belongs to the ClpX chaperone family. HslU subfamily. A double ring-shaped homohexamer of HslV is capped on each side by a ring-shaped HslU homohexamer. The assembly of the HslU/HslV complex is dependent on binding of ATP.

It localises to the cytoplasm. In terms of biological role, ATPase subunit of a proteasome-like degradation complex; this subunit has chaperone activity. The binding of ATP and its subsequent hydrolysis by HslU are essential for unfolding of protein substrates subsequently hydrolyzed by HslV. HslU recognizes the N-terminal part of its protein substrates and unfolds these before they are guided to HslV for hydrolysis. The polypeptide is ATP-dependent protease ATPase subunit HslU (Enterococcus faecalis (strain ATCC 700802 / V583)).